A 1502-amino-acid chain; its full sequence is Clustered mitochondria protein homolog (1502 aa).

Disordered stretches follow at residues 1–62, 571–615, 755–799, 1054–1085, 1381–1403, and 1429–1502; these read MSES…EPLD, AQAE…NPMM, AEAE…EEDR, KDQE…GETV, ARER…RLGG, and GQGG…GAKR. Low complexity predominate over residues 7 to 35; that stretch reads AAAQNGQAEEQQLQQQLDEQQQLEEQQQL. Residues 53–62 are compositionally biased toward basic and acidic residues; the sequence is KPKDSTEPLD. Positions 399–693 constitute a Clu domain; the sequence is EILRTQLAFL…RLAPVDVEWL (295 aa). The segment covering 575–586 has biased composition (acidic residues); sequence TEAEAETADAVE. Residues 587-606 are compositionally biased toward basic and acidic residues; the sequence is GEQKKEDWVDVEKPTEKSGS. Low complexity predominate over residues 781-792; that stretch reads EEQSAAASAAAA. Residues 1054–1069 are compositionally biased toward basic and acidic residues; it reads KDQEEEENKREENIKS. Over residues 1429–1451 the composition is skewed to low complexity; that stretch reads GQGGNPSANAAAATAGQGEQANG. Residues 1462–1471 show a composition bias toward basic and acidic residues; that stretch reads RGTESLEELV. Residues 1486–1502 show a composition bias toward basic residues; that stretch reads KRGKNALRGKRRTGAKR.

The protein belongs to the CLU family. In terms of assembly, may associate with the eukaryotic translation initiation factor 3 (eIF-3) complex.

It localises to the cytoplasm. Functionally, mRNA-binding protein involved in proper cytoplasmic distribution of mitochondria. The protein is Clustered mitochondria protein homolog of Cryptococcus neoformans var. neoformans serotype D (strain B-3501A) (Filobasidiella neoformans).